The chain runs to 1368 residues: MQYSFTEKKRIRKSFAKRPIVHQVPFLLATQLESFSTFLQADVLAAQRKPEGLQAAFTSVFPIVSHNGFARLEFVSYALSAPAFNIKECQQRGLTYCSALRAKVRLVILDKESPNKPVVKEVKEQEVYMGEMPLMTPTGSFVINGTERVIVSQLHRSPGVFFEHDKGKTHSSGKLLFSARIIPYRGSWLDFEFDPKDILYFRVDRRRKMPVTILLKAIGLTPEQILANFFVFDNFTLMDEGAQLEFVPERLRGEVARFDITDRDGKVIVQKDKRINAKHIRDLEAAKTKFISVPEDYLLGRVLAKNVVDGDTGEVIASANDEVTESVLEKLREAGIKDIQTLYTNDLDQGPYISSTLRVDETTDRTAARIAIYRMMRPGEPPTEEAVEALFNRLFYSEEAYDLSKVGRMKFNRRVSRDEITGPMTLQDDDILATIKILVELRNGKGEVDDIDHLGNRRVRCVGELAENQFRAGLVRVERAVKERLGQAESENLMPHDLINSKPISSAIREFFGSSQLSQFMDQTNPLSEITHKRRVSALGPGGLTRERAGFEVRDVHPTHYGRVCPIETPEGPNIGLINSLALYAHLNEYGFLETPYRKVVDSKVTDQIDYLSAIEEGRYMIAQANAAIDENGQLIDELVSSREAGETMMVTPDRIQYMDVAPSQIVSVAASLIPFLEHDDANRALMGSNMQRQAVPCLRPEKPVVGTGIERTCAVDSGTTVQAFRGGVVDYVDAGRIVIRVNDDEAVAGEVGVDIYNLIKYTRSNQNTNINQRPIVKMGDKVSRGDVLADGASTDLGELALGQNMLIAFMPWNGYNFEDSILISEKVVADDRYTSIHIEELNVVARDTKLGPEEITRDISNLAEVQLGRLDESGIVYIGAEVEAGDVLVGKVTPKGETQLTPEEKLLRAIFGEKASDVKDTSLRVPSGMSGTVIDVQVFTREGIQRDKRAQQIIDDELKRYRLDLNDQLRIVEGDAFQRLARMLVGKVANGGPKKLAKGTKIDQAYLEDLDHYHWFDIRLADDEAAAQLEAIKNSIEEKRHQFDLAFEEKRKKLTQGDELPPGVLKMVKVYLAVKRRLQPGDKMAGRHGNKGVVSKIVPIEDMPYMADGRPADVVLNPLGVPSRMNVGQVLEVHLGWAAKGLGWRIGEMLQRQAKIEEMRVFLTKIYNDSGRQEDLESFTDEEILELAKNLREGVPFATPVFDGATEEEMGKMLDLAFPDDIAEQLGMNPSKNQVRLYDGRTGEMFERRVTLGYMHYLKLHHLVDDKMHARSTGPYSLVTQQPLGGKAQFGGQRFGEMEVWALEAYGASYVLQEMLTVKSDDVNGRTKVYENLVKGDHVIDAGMPESFNVLVKEIRSLGIDIDLDRN.

The protein belongs to the RNA polymerase beta chain family. In terms of assembly, the RNAP catalytic core consists of 2 alpha, 1 beta, 1 beta' and 1 omega subunit. When a sigma factor is associated with the core the holoenzyme is formed, which can initiate transcription.

It carries out the reaction RNA(n) + a ribonucleoside 5'-triphosphate = RNA(n+1) + diphosphate. In terms of biological role, DNA-dependent RNA polymerase catalyzes the transcription of DNA into RNA using the four ribonucleoside triphosphates as substrates. The polypeptide is DNA-directed RNA polymerase subunit beta (Burkholderia lata (strain ATCC 17760 / DSM 23089 / LMG 22485 / NCIMB 9086 / R18194 / 383)).